A 161-amino-acid chain; its full sequence is Nucleotide-binding protein Shew_2893 (161 aa).

It belongs to the YajQ family.

Its function is as follows. Nucleotide-binding protein. The protein is Nucleotide-binding protein Shew_2893 of Shewanella loihica (strain ATCC BAA-1088 / PV-4).